The sequence spans 574 residues: Cytochrome P450 4g15 (574 aa).

The interval 288-327 (REREQNGGVDQTPSTAGSDEKDREKDKEKASPVAGLSYGQ) is disordered. Residues 295–304 (GVDQTPSTAG) are compositionally biased toward polar residues. A compositionally biased stretch (basic and acidic residues) spans 305 to 317 (SDEKDREKDKEKA). E379 and C519 together coordinate heme.

Belongs to the cytochrome P450 family. Heme is required as a cofactor. In terms of tissue distribution, expressed in larval brain cortex cells and ring glands and weakly in larval digestive system and adult nervous system.

The protein resides in the endoplasmic reticulum membrane. Its subcellular location is the microsome membrane. Its function is as follows. Probably involved in steroid hormones biosynthesis. This is Cytochrome P450 4g15 (Cyp4g15) from Drosophila melanogaster (Fruit fly).